The sequence spans 426 residues: Docking protein 3 (426 aa).

The PH domain maps to 4 to 115 (PVKDGIIYVQ…WIEQLCQLAF (112 aa)). The region spanning 145–249 (DLTEFPVLVL…ACQQQGQESP (105 aa)) is the IRS-type PTB domain. A disordered region spans residues 243–282 (QQGQESPQPSAQGLSNQPWGAEAEDPQCSPTLGRAHSGSH). The segment covering 247 to 260 (ESPQPSAQGLSNQP) has biased composition (polar residues). Position 331 is a phosphotyrosine (Y331). The disordered stretch occupies residues 357 to 426 (GCRQAPEGHS…RDGPGARDWS (70 aa)). Residues 402 to 411 (KPQRTLRAKL) are compositionally biased toward basic residues.

The protein belongs to the DOK family. Type A subfamily. In terms of assembly, homooligomer. Interacts with GRB2 and INPP5D/SHIP. In terms of processing, tyrosine-phosphorylated in the presence of GRB2.

Its subcellular location is the cytoplasm. It is found in the cell membrane. Functionally, DOK proteins are enzymatically inert adaptor or scaffolding proteins. They provide a docking platform for the assembly of multimolecular signaling complexes. Plays a role as negative regulator of the mobilization of calcium ions and of calcium signaling. The chain is Docking protein 3 (DOK3) from Gallus gallus (Chicken).